The primary structure comprises 224 residues: Inner membrane-spanning protein YciB (224 aa).

Helical transmembrane passes span 20-40 (GVNPVLKLVLELGPLLVFFFA), 61-81 (IFVATGLFMAATAIALIASWL), 86-106 (LPIMPMVSGVVVFIFGALTLY), 123-143 (LFGGVLLGGLYFGRSLLGYVF), 156-176 (KLTFRWGLFFLFLAVVNEVVW), and 187-207 (FKVWGIMPITLLFTFSQMPLI).

The protein belongs to the YciB family.

The protein localises to the cell inner membrane. Plays a role in cell envelope biogenesis, maintenance of cell envelope integrity and membrane homeostasis. This chain is Inner membrane-spanning protein YciB, found in Mesorhizobium japonicum (strain LMG 29417 / CECT 9101 / MAFF 303099) (Mesorhizobium loti (strain MAFF 303099)).